The chain runs to 98 residues: MPAIEVGRLCVKTRGREAGRKCVIVEIIDDNFVLITGPKDVSGVKRRRANINHIEVLPEKINIQPGASDEEVKKALEEAGLLDFMRERVRIELKPGLL.

The protein belongs to the eukaryotic ribosomal protein eL14 family.

The sequence is that of Large ribosomal subunit protein eL14 from Hyperthermus butylicus (strain DSM 5456 / JCM 9403 / PLM1-5).